Reading from the N-terminus, the 324-residue chain is NADH-ubiquinone oxidoreductase chain 1 (324 aa).

Transmembrane regions (helical) follow at residues 10–30 (MIMTLSYMIPILIAVAFLTLV), 76–96 (FLFILTPILALLLALTIWTPL), 107–127 (LGLLFLLAMSSLTVYSLLWSG), 143–163 (VAQTISYEVTLAIILLSTIML), 178–198 (PMYLIFSSWPLTMMWYISTLA), 229–249 (LFFLAEYANIMLMNTLTITLF), 260–280 (ELFSITLATKVLLLSSSFLWI), and 300–320 (FLPLTLAMCLWHTSMPISYAG).

Belongs to the complex I subunit 1 family.

It localises to the mitochondrion inner membrane. It carries out the reaction a ubiquinone + NADH + 5 H(+)(in) = a ubiquinol + NAD(+) + 4 H(+)(out). Functionally, core subunit of the mitochondrial membrane respiratory chain NADH dehydrogenase (Complex I) that is believed to belong to the minimal assembly required for catalysis. Complex I functions in the transfer of electrons from NADH to the respiratory chain. The immediate electron acceptor for the enzyme is believed to be ubiquinone. In Coturnix japonica (Japanese quail), this protein is NADH-ubiquinone oxidoreductase chain 1 (MT-ND1).